A 546-amino-acid chain; its full sequence is Immunoglobulin heavy constant epsilon (546 aa).

Topologically, residues 1 to 499 are extracellular; that stretch reads ASTQSPSVFP…EAPWTWTGLC (499 aa). Ig-like domains lie at 6-103, 112-210, 214-318, and 324-423; these read PSVF…KTFS, PTVK…KKCA, PRGV…TKTS, and PEVY…RAVS. Disulfide bonds link C15–C105, C29–C85, C135–C193, C239–C299, and C345–C405. N21, N49, N99, N146, N252, N264, and N275 each carry an N-linked (GlcNAc...) asparagine glycan. A helical membrane pass occupies residues 500 to 520; the sequence is IFAALFLLSVSYSAAITLLMV. Topologically, residues 521-546 are cytoplasmic; the sequence is QRFLSATRQGRPQTSLDYTNVLQPHA.

As to quaternary structure, the basic structural unit of both sIgE and mIgE molecules consists of two identical heavy chains and two identical light chains; disulfide-linked. N-terminal variable regions of the heavy and light chains form the antigen binding sites, whereas the C-terminal constant regions of the heavy chains interact with immune receptors to mediate effector functions. Part of IgE antibody. Interacts (via CH3) with the alpha chain/FCE1RA of IgE Fc receptor complex. Interacts (via CH3 region) with FCER2 (via C-type lectin domain); this interaction regulates IgE homeostasis. In terms of assembly, part of IgE B cell antigen receptor complex (BCR). The BCR complex consists of one mIgE molecule responsible for antigen binding, non-covalently associated with CD79A and CD79B signaling chains. As to expression, expressed in B lymphocytes stimulated with IL4 and CD40.

The protein localises to the secreted. Its subcellular location is the cell membrane. In terms of biological role, constant region of immunoglobulin heavy chains. Immunoglobulins, also known as antibodies, are membrane-bound or secreted glycoproteins produced by B lymphocytes. In the recognition phase of humoral immunity, the membrane-bound immunoglobulins serve as receptors which, upon binding of a specific antigen, trigger the clonal expansion and differentiation of B lymphocytes into immunoglobulins-secreting plasma cells. Secreted immunoglobulins mediate the effector phase of humoral immunity, which results in the elimination of bound antigens. The antigen binding site is formed by the variable domain of one heavy chain, together with that of its associated light chain. Thus, each immunoglobulin has two antigen binding sites with remarkable affinity for a particular antigen. The variable domains are assembled by a process called V-(D)-J rearrangement and can then be subjected to somatic hypermutations which, after exposure to antigen and selection, allow affinity maturation for a particular antigen. Its function is as follows. Constant region of secreted IgE, also known as the Fc region of IgE antibody. Mediates IgE effector functions on myeloid and lymphoid cells primarily via two Fc receptors, the high-affinity IgE Fc receptor complex/FCER1A:MS4A2:FCGR1A and the low-affinity FCER2 receptor, which upon antigen/allergen cross-linking initiate signaling pathways that lead to immune cell activation and differentiation. Triggers the immediate hypersensitivity response to allergens as a host defense mechanism against helminth parasites, pathogenic bacteria and venom toxicity. When dysregulated, it can elicit harmful life-threatening allergic and anaphylactic reactions. Stimulates the high-affinity IgE Fc receptor complex/FCER1A:MS4A2:FCGR1A on mast cells, basophils and eosinophils leading to secretion of vasoactive amines, lipid mediators and cytokines that contribute to inflammatory response, tissue remodeling and cytotoxicity against microbes. On macrophages, cross-linking of FCER2 by IgE immune complexes induces intracellular killing of parasites through activation of L-Arginine-nitric oxide pathway. Activates macrophages to kill tumor cells via antigen-specific antibody-dependent cytotoxicity (ADCC). Triggers differentiation of quiescent M0 macrophages toward M1 state and reprograms M2 macrophages toward a proinflammatory state with antitumor functions. Stimulates FCER2 on B cells and initiates IgE-dependent antigen uptake and presentation to T cells. Constant region of membrane-bound IgE (long mIgE), part of the B cell receptor complex (BCR). Upon antigen cross-linking triggers quick BCR signaling, ensuring survival of IgE-switched B cells and differentiation into plasma cells, thus regulating both primary and memory IgE responses. Functionally, constant region of membrane-bound IgE (short mIgE), part of the B cell receptor complex (BCR). Upon antigen cross-linking initiates slower but sustained BCR signaling that negatively regulates mature B cell proliferation. This Homo sapiens (Human) protein is Immunoglobulin heavy constant epsilon.